Consider the following 133-residue polypeptide: ATP synthase epsilon chain (133 aa).

Belongs to the ATPase epsilon chain family. In terms of assembly, F-type ATPases have 2 components, CF(1) - the catalytic core - and CF(0) - the membrane proton channel. CF(1) has five subunits: alpha(3), beta(3), gamma(1), delta(1), epsilon(1). CF(0) has three main subunits: a, b and c.

It localises to the cell membrane. Its function is as follows. Produces ATP from ADP in the presence of a proton gradient across the membrane. In Clostridium botulinum (strain 657 / Type Ba4), this protein is ATP synthase epsilon chain.